A 785-amino-acid chain; its full sequence is (+)-copalyl diphosphate synthase 3, chloroplastic (785 aa).

K238 contacts substrate. Residues D371 and D373 each coordinate Mg(2+). The short motif at 371 to 374 is the DXDD motif element; that stretch reads DIDD. K457 is a substrate binding site.

It belongs to the terpene synthase family. It depends on Mg(2+) as a cofactor. In terms of tissue distribution, present in both leaves and flowers, with higher levels in leaves.

It is found in the plastid. The protein localises to the chloroplast. The catalysed reaction is (2E,6E,10E)-geranylgeranyl diphosphate = (+)-copalyl diphosphate. Its pathway is secondary metabolite biosynthesis; terpenoid biosynthesis. In terms of biological role, involved in the biosynthesis of labdane-type diterpenoid including marrubiin and other labdane-related furanoid diterpenoids with potential applications as anti-diabetics, analgesics or vasorelaxants. Terpene synthase that produces (+)-copalyl diphosphate ((+)-CPP) from geranylgeranyl diphosphate (GGPP). This is (+)-copalyl diphosphate synthase 3, chloroplastic from Marrubium vulgare (White horehound).